Consider the following 69-residue polypeptide: Small, acid-soluble spore protein A (69 aa).

The protein belongs to the alpha/beta-type SASP family.

SASP are bound to spore DNA. They are double-stranded DNA-binding proteins that cause DNA to change to an a-like conformation. They protect the DNA backbone from chemical and enzymatic cleavage and are thus involved in dormant spore's high resistance to UV light. The chain is Small, acid-soluble spore protein A (sspA) from Bacillus subtilis (strain 168).